The chain runs to 569 residues: Paxillin-B (569 aa).

The short motif at aspartate 10–leucine 18 is the LD motif 1 element. Residues glutamine 62–asparagine 78 show a composition bias toward polar residues. Residues glutamine 62–isoleucine 103 are disordered. The span at threonine 79–glutamine 102 shows a compositional bias: low complexity. Residues leucine 106–leucine 112 carry the LD motif 2 motif. The interval threonine 129–leucine 311 is disordered. A compositionally biased stretch (low complexity) spans asparagine 150–serine 161. Composition is skewed to polar residues over residues arginine 162 to lysine 188 and threonine 196 to tyrosine 206. The segment covering serine 207–proline 217 has biased composition (low complexity). Residues leucine 232–leucine 239 carry the LD motif 3 motif. Basic residues predominate over residues histidine 258–proline 272. Over residues asparagine 273–asparagine 301 the composition is skewed to low complexity. Positions leucine 311 to leucine 318 match the LD motif 4 motif. LIM zinc-binding domains follow at residues glycine 334 to phenylalanine 391, alanine 393 to valine 452, arginine 453 to glycine 510, and serine 511 to alanine 569.

The protein belongs to the paxillin family. As to expression, expressed in the upper and lower cup of the fruiting body.

It is found in the cytoplasm. Its subcellular location is the cell cortex. The protein resides in the cell projection. It localises to the filopodium. The protein localises to the cell junction. It is found in the focal adhesion. Its subcellular location is the cytoskeleton. Required for cell-substrate adhesion, cell sorting, slug migration, and cell differentiation. May function upstream of limB. The protein is Paxillin-B (paxB) of Dictyostelium discoideum (Social amoeba).